We begin with the raw amino-acid sequence, 166 residues long: Deoxyuridine 5'-triphosphate nucleotidohydrolase (166 aa).

The disordered stretch occupies residues 1-24 (MACVNEPSPKLQKLDRNGIHGDSS). E138 contacts Mg(2+).

This sequence belongs to the dUTPase family. As to quaternary structure, homotrimer. The cofactor is Mg(2+).

It catalyses the reaction dUTP + H2O = dUMP + diphosphate + H(+). It functions in the pathway pyrimidine metabolism; dUMP biosynthesis; dUMP from dCTP (dUTP route): step 2/2. Its function is as follows. This enzyme is involved in nucleotide metabolism: it produces dUMP, the immediate precursor of thymidine nucleotides and it decreases the intracellular concentration of dUTP, preventing uracil incorporation into DNA. The polypeptide is Deoxyuridine 5'-triphosphate nucleotidohydrolase (DUT) (Arabidopsis thaliana (Mouse-ear cress)).